We begin with the raw amino-acid sequence, 177 residues long: Putative pre-16S rRNA nuclease (177 aa).

It belongs to the YqgF nuclease family.

It is found in the cytoplasm. Could be a nuclease involved in processing of the 5'-end of pre-16S rRNA. The polypeptide is Putative pre-16S rRNA nuclease (Psychrobacter sp. (strain PRwf-1)).